The following is a 243-amino-acid chain: Ribosomal RNA small subunit methyltransferase J (243 aa).

S-adenosyl-L-methionine contacts are provided by residues 112–113 and Asp164; that span reads ER.

Belongs to the methyltransferase superfamily. RsmJ family.

The protein resides in the cytoplasm. It catalyses the reaction guanosine(1516) in 16S rRNA + S-adenosyl-L-methionine = N(2)-methylguanosine(1516) in 16S rRNA + S-adenosyl-L-homocysteine + H(+). Its function is as follows. Specifically methylates the guanosine in position 1516 of 16S rRNA. In Legionella pneumophila (strain Paris), this protein is Ribosomal RNA small subunit methyltransferase J.